We begin with the raw amino-acid sequence, 804 residues long: Cell surface sensor MSB2 (804 aa).

Positions 1–20 are cleaved as a signal peptide; it reads MHNFSKLAVAFVAAASFASA. Residues 21-694 lie on the Extracellular side of the membrane; the sequence is EPETKAKVER…TNQSATQRGT (674 aa). An N-linked (GlcNAc...) asparagine glycan is attached at Asn-45. 2 stretches are compositionally biased toward low complexity: residues 46–58 and 69–80; these read TTTP…SSTS and SSFSSSASSSSA. 2 disordered regions span residues 46–90 and 105–220; these read TTTP…RQPT and TDST…ATSN. The serine/threonine rich region (STR) stretch occupies residues 46–475; the sequence is TTTPASEASS…SVAPTSATSS (430 aa). 2 stretches are compositionally biased toward polar residues: residues 81–90 and 109–126; these read QELTASRQPT and PFSQ…SATG. Low complexity-rich tracts occupy residues 128–143 and 150–169; these read VTPI…PSTA and SALT…SVTS. Asn-157 carries N-linked (GlcNAc...) asparagine glycosylation. Residues 170–188 show a composition bias toward polar residues; sequence PGSTSGPAGTPESSSASDF. Residues 189–202 are compositionally biased toward low complexity; the sequence is TSAVATSRASTATS. Asn-298, Asn-308, Asn-357, and Asn-393 each carry an N-linked (GlcNAc...) asparagine glycan. Residues 345–394 show a composition bias toward polar residues; it reads VQTLPPVSTPTANGTVTSPPVDSQTTVLPTTTPGLSSDTIVTSPGVTANS. The interval 345–516 is disordered; it reads VQTLPPVSTP…APTVLPSDLP (172 aa). Composition is skewed to low complexity over residues 395–407 and 427–476; these read TQVP…TIPT and NNTV…TSSA. N-linked (GlcNAc...) asparagine glycans are attached at residues Asn-427 and Asn-433. Residues 482-641 are HKR11-MSB2 homology domain (HMH); the sequence is WLPTTIIVQA…NGMLAHNLTM (160 aa). Over residues 493–508 the composition is skewed to polar residues; sequence LPSTTGSSTNAPSSAP. N-linked (GlcNAc...) asparagine glycans are attached at residues Asn-629, Asn-638, Asn-669, Asn-683, and Asn-686. The segment at 658 to 689 is disordered; sequence KPAGAGSGTGGNGSNGPNDVFNNDNNSTNQSA. Gly residues predominate over residues 660 to 671; sequence AGAGSGTGGNGS. Over residues 672-686 the composition is skewed to low complexity; it reads NGPNDVFNNDNNSTN. A helical transmembrane segment spans residues 695-715; it reads VAGIAFGAVSLAAAYGAAMFI. Residues 716 to 804 lie on the Cytoplasmic side of the membrane; that stretch reads VARRYKKKRQ…VAQENSLGWN (89 aa). Disordered regions lie at residues 724-748 and 762-804; these read RQAH…PALM and GVMG…LGWN. Positions 731-744 are enriched in polar residues; that stretch reads SSVATPSEMRQSGS. The span at 774–787 shows a compositional bias: low complexity; sequence GSNGSGRSAGNSAR.

Belongs to the HKR1/MSB2 family.

It localises to the cell membrane. It is found in the vacuole membrane. MSB2 and SHO1 have overlapping functions in recognizing various surface signals for MAPK PMK1 activation and appressorium formation. While MSB2 is critical for sensing surface hydrophobicity and cutin monomers, SHO1 may play a more important role in recognizing rice leaf waxes. The protein is Cell surface sensor MSB2 of Pyricularia oryzae (strain 70-15 / ATCC MYA-4617 / FGSC 8958) (Rice blast fungus).